The chain runs to 426 residues: Glutamate-1-semialdehyde 2,1-aminomutase (426 aa).

At lysine 265 the chain carries N6-(pyridoxal phosphate)lysine.

The protein belongs to the class-III pyridoxal-phosphate-dependent aminotransferase family. HemL subfamily. It depends on pyridoxal 5'-phosphate as a cofactor.

The protein localises to the cytoplasm. The enzyme catalyses (S)-4-amino-5-oxopentanoate = 5-aminolevulinate. Its pathway is porphyrin-containing compound metabolism; protoporphyrin-IX biosynthesis; 5-aminolevulinate from L-glutamyl-tRNA(Glu): step 2/2. This chain is Glutamate-1-semialdehyde 2,1-aminomutase, found in Hyperthermus butylicus (strain DSM 5456 / JCM 9403 / PLM1-5).